The following is a 305-amino-acid chain: Homoserine O-acetyltransferase (305 aa).

Cys-142 acts as the Acyl-thioester intermediate in catalysis. The substrate site is built by Lys-163 and Ser-192. Catalysis depends on His-235, which acts as the Proton acceptor. The active site involves Glu-237. A substrate-binding site is contributed by Arg-249.

Belongs to the MetA family.

Its subcellular location is the cytoplasm. It catalyses the reaction L-homoserine + acetyl-CoA = O-acetyl-L-homoserine + CoA. Its pathway is amino-acid biosynthesis; L-methionine biosynthesis via de novo pathway; O-acetyl-L-homoserine from L-homoserine: step 1/1. In terms of biological role, transfers an acetyl group from acetyl-CoA to L-homoserine, forming acetyl-L-homoserine. This chain is Homoserine O-acetyltransferase, found in Acetivibrio thermocellus (strain ATCC 27405 / DSM 1237 / JCM 9322 / NBRC 103400 / NCIMB 10682 / NRRL B-4536 / VPI 7372) (Clostridium thermocellum).